The chain runs to 236 residues: Sugar fermentation stimulation protein homolog (236 aa).

It belongs to the SfsA family.

This chain is Sugar fermentation stimulation protein homolog, found in Synechococcus elongatus (strain ATCC 33912 / PCC 7942 / FACHB-805) (Anacystis nidulans R2).